The primary structure comprises 486 residues: UDP-N-acetylmuramoyl-L-alanyl-D-glutamate--2,6-diaminopimelate ligase (486 aa).

Position 34 (serine 34) interacts with UDP-N-acetyl-alpha-D-muramoyl-L-alanyl-D-glutamate. 112 to 118 (GTAGKTS) lines the ATP pocket. UDP-N-acetyl-alpha-D-muramoyl-L-alanyl-D-glutamate-binding positions include 154-155 (TT), serine 181, glutamine 187, and arginine 189. Residue lysine 221 is modified to N6-carboxylysine. Residues arginine 385, 409 to 412 (DNPR), glycine 457, and glutamate 461 each bind meso-2,6-diaminopimelate. Positions 409 to 412 (DNPR) match the Meso-diaminopimelate recognition motif motif.

The protein belongs to the MurCDEF family. MurE subfamily. Mg(2+) serves as cofactor. Post-translationally, carboxylation is probably crucial for Mg(2+) binding and, consequently, for the gamma-phosphate positioning of ATP.

Its subcellular location is the cytoplasm. The catalysed reaction is UDP-N-acetyl-alpha-D-muramoyl-L-alanyl-D-glutamate + meso-2,6-diaminopimelate + ATP = UDP-N-acetyl-alpha-D-muramoyl-L-alanyl-gamma-D-glutamyl-meso-2,6-diaminopimelate + ADP + phosphate + H(+). The protein operates within cell wall biogenesis; peptidoglycan biosynthesis. Functionally, catalyzes the addition of meso-diaminopimelic acid to the nucleotide precursor UDP-N-acetylmuramoyl-L-alanyl-D-glutamate (UMAG) in the biosynthesis of bacterial cell-wall peptidoglycan. The protein is UDP-N-acetylmuramoyl-L-alanyl-D-glutamate--2,6-diaminopimelate ligase of Rhizobium meliloti (strain 1021) (Ensifer meliloti).